The sequence spans 788 residues: Protein FAR1-RELATED SEQUENCE 12 (788 aa).

The FAR1 1 domain maps to 57 to 133; it reads EFYNAYAART…QKEHNHELGG (77 aa). The interval 127–200 is disordered; that stretch reads HNHELGGEGS…GEVSDDHHQT (74 aa). The span at 142–151 shows a compositional bias: low complexity; it reads PRPSRAPAPT. Residues 165-175 show a composition bias toward basic and acidic residues; that stretch reads KVVDESDRETR. In terms of domain architecture, FAR1 2 spans 225-301; the sequence is QFYQAYAEVV…NKDHNHDLEP (77 aa). The region spanning 399–495 is the MULE domain; that stretch reads SVVFDTSYRK…SAWQIREKER (97 aa). The SWIM-type zinc finger occupies 674 to 710; the sequence is HAVTFSASNLNSSCSCQMFEHEGLLCRHILKVFNLLD.

This sequence belongs to the FHY3/FAR1 family. As to expression, expressed in hypocotyls, rosette and cauline leaves, inflorescences stems, flowers and siliques.

The protein localises to the nucleus. Putative transcription activator involved in regulating light control of development. The polypeptide is Protein FAR1-RELATED SEQUENCE 12 (FRS12) (Arabidopsis thaliana (Mouse-ear cress)).